Consider the following 497-residue polypeptide: Probable cytosol aminopeptidase (497 aa).

Residues Lys-263 and Asp-268 each contribute to the Mn(2+) site. Residue Lys-275 is part of the active site. Asp-286, Asp-345, and Glu-347 together coordinate Mn(2+). Arg-349 is an active-site residue.

The protein belongs to the peptidase M17 family. Requires Mn(2+) as cofactor.

Its subcellular location is the cytoplasm. The catalysed reaction is Release of an N-terminal amino acid, Xaa-|-Yaa-, in which Xaa is preferably Leu, but may be other amino acids including Pro although not Arg or Lys, and Yaa may be Pro. Amino acid amides and methyl esters are also readily hydrolyzed, but rates on arylamides are exceedingly low.. It carries out the reaction Release of an N-terminal amino acid, preferentially leucine, but not glutamic or aspartic acids.. In terms of biological role, presumably involved in the processing and regular turnover of intracellular proteins. Catalyzes the removal of unsubstituted N-terminal amino acids from various peptides. The chain is Probable cytosol aminopeptidase from Agrobacterium fabrum (strain C58 / ATCC 33970) (Agrobacterium tumefaciens (strain C58)).